A 2058-amino-acid chain; its full sequence is Protein Daple (2058 aa).

The region spanning 11–131 (HFLESPLVTW…KILLLMLGCA (121 aa)) is the Calponin-homology (CH) domain. Coiled coils occupy residues 195–221 (HLKR…DYLQ), 247–428 (EDKK…SMNE), 455–1016 (ELNE…LRGA), 1043–1082 (ELLK…NLNL), and 1108–1388 (ANLQ…KFYD). 7 disordered regions span residues 1406-1444 (LIKP…MRPL), 1480-1592 (HRMS…EDMI), 1617-1655 (TKNR…PGSE), 1696-1724 (LHPS…LPSA), 1831-1857 (YSAT…RGNS), 1940-1959 (LALP…ASSL), and 1988-2051 (PVRP…PQTV). The span at 1409 to 1418 (PKKEPSRESV) shows a compositional bias: basic and acidic residues. Positions 1419 to 1429 (KSPTDVQSKTM) are enriched in polar residues. Positions 1494–1506 (GPEHLSRSRRMES) are enriched in basic and acidic residues. Residues 1552 to 1577 (NAGSSRVPWTSSLEVSRSASNSSSPL) show a composition bias toward polar residues. 2 consecutive short sequence motifs (GBA) follow at residues 1653–1675 (GSEM…PSRR) and 1676–1697 (HSLN…ETLH). The span at 1831 to 1841 (YSATSSSQSPE) shows a compositional bias: polar residues. The span at 2039 to 2048 (PASPDPSADP) shows a compositional bias: low complexity. Positions 2055–2058 (YGCV) match the PDZ-binding motif.

Belongs to the CCDC88 family. As to quaternary structure, interacts with dvl2/dsh via the PDZ-binding motif. Expressed weakly in gastrulae, with slightly stronger expression in the dorsal region. In neurulae, expressed in the neural plate with strong expression in the presumptive mesencephalic region. At the tailbud stage, expressed in somatic cells and in part of the tail. Also strongly expressed in regions of the head including eye vesicles, otic vesicles, olfactory placode and the pharyngeal cavity.

It is found in the cytoplasm. Its subcellular location is the cell junction. Functionally, positive regulator of Wnt signaling, acting synergistically with dvl2/dsh. Functions upstream of ctnnb1/beta-catenin in the canonical Wnt pathway, and also activates jnk in the Wnt/planar cell polarity (PCP) pathway. Acts as a non-receptor guanine nucleotide exchange factor which binds to and activates guanine nucleotide-binding protein G(i) alpha subunits. This promotes apical cell constriction and subsequent bending of the neural plate during neurulation via arhgef18. The protein is Protein Daple (ccdc88c) of Xenopus laevis (African clawed frog).